The following is a 318-amino-acid chain: Ribonuclease Z (318 aa).

Zn(2+) contacts are provided by His63, His65, Asp67, His68, His142, Asp213, and His273. The Proton acceptor role is filled by Asp67.

This sequence belongs to the RNase Z family. In terms of assembly, homodimer. It depends on Zn(2+) as a cofactor.

It carries out the reaction Endonucleolytic cleavage of RNA, removing extra 3' nucleotides from tRNA precursor, generating 3' termini of tRNAs. A 3'-hydroxy group is left at the tRNA terminus and a 5'-phosphoryl group is left at the trailer molecule.. Zinc phosphodiesterase, which displays some tRNA 3'-processing endonuclease activity. Probably involved in tRNA maturation, by removing a 3'-trailer from precursor tRNA. This chain is Ribonuclease Z, found in Leuconostoc mesenteroides subsp. mesenteroides (strain ATCC 8293 / DSM 20343 / BCRC 11652 / CCM 1803 / JCM 6124 / NCDO 523 / NBRC 100496 / NCIMB 8023 / NCTC 12954 / NRRL B-1118 / 37Y).